A 524-amino-acid chain; its full sequence is Dihydromonacolin L monooxygenase mokC (524 aa).

Residues 1 to 25 (MTVPTDTVSRRLQSLAWSDIKQHAP) lie on the Cytoplasmic side of the membrane. Residues 26-47 (WLPSSRTLVSGFLCLILLQILY) form a helical; Signal-anchor for type II membrane protein membrane-spanning segment. At 48 to 524 (SRGRKSDLRV…LMMRRRDEDL (477 aa)) the chain is on the lumenal side. 2 N-linked (GlcNAc...) asparagine glycosylation sites follow: N396 and N401. C467 lines the heme pocket.

The protein belongs to the cytochrome P450 family. Heme serves as cofactor.

It localises to the endoplasmic reticulum membrane. The catalysed reaction is dihydromonacolin L carboxylate + reduced [NADPH--hemoprotein reductase] + O2 = monacolin L carboxylate + oxidized [NADPH--hemoprotein reductase] + 2 H2O + H(+). It carries out the reaction monacolin L carboxylate + reduced [NADPH--hemoprotein reductase] + O2 = monacolin J carboxylate + oxidized [NADPH--hemoprotein reductase] + H2O + H(+). It participates in polyketide biosynthesis; lovastatin biosynthesis. Its function is as follows. Cytochrome P450 monooxygenase; part of the gene cluster that mediates the biosynthesis of monakolin K, also known as lovastatin, and which acts as a potent competitive inhibitor of HMG-CoA reductase. Monakolin K biosynthesis is performed in two stages. The first stage is catalyzed by the nonaketide synthase mokA, which belongs to type I polyketide synthases and catalyzes the iterative nine-step formation of the polyketide. This PKS stage is completed by the action of dehydrogenase mokE, which catalyzes the NADPH-dependent reduction of the unsaturated tetra-, penta- and heptaketide intermediates that arise during the mokA-mediated biosynthesis of the nonaketide chain and leads to dihydromonacolin L. Covalently bound dihydromonacolin L is released from mokA by the mokD esterase. Conversion of dihydromonacolin L into monacolin L and then monacolin J is subsequently performed with the participation of molecular oxygen and P450 monoogygenase mokC. Finally, mokF performs the conversion of monacoline J to monacoline K through the addition of the side-chain diketide moiety (2R)-2-methylbutanoate produced by the diketide synthase mokB. In Monascus pilosus (Red mold), this protein is Dihydromonacolin L monooxygenase mokC.